A 540-amino-acid chain; its full sequence is Coatomer subunit delta (540 aa).

The interval 169-263 is disordered; the sequence is RHEEMLRGKR…GMILGGKSGT (95 aa). Positions 179 to 197 are enriched in gly residues; the sequence is SGGYTGISGGGGMGSGGMG. The segment covering 212–229 has biased composition (low complexity); the sequence is NNNNNNNNNNNNNNNNNN. Residues 238–250 show a composition bias toward polar residues; the sequence is SPNTSRPSAASSG. Residues 251–261 show a composition bias toward gly residues; that stretch reads SQGGMILGGKS. One can recognise an MHD domain in the interval 304-540; the sequence is QEGVHITVEE…TLSVDTYEIK (237 aa).

It belongs to the adaptor complexes medium subunit family. Delta-COP subfamily. In terms of assembly, oligomeric complex that consists of at least the alpha, beta, beta', gamma, delta, epsilon and zeta subunits.

The protein localises to the cytoplasm. The protein resides in the golgi apparatus membrane. It is found in the cytoplasmic vesicle. It localises to the COPI-coated vesicle membrane. The coatomer is a cytosolic protein complex that binds to dilysine motifs and reversibly associates with Golgi non-clathrin-coated vesicles, which further mediate biosynthetic protein transport from the ER, via the Golgi up to the trans Golgi network. Coatomer complex is required for budding from Golgi membranes, and is essential for the retrograde Golgi-to-ER transport of dilysine-tagged proteins. The protein is Coatomer subunit delta (copd) of Dictyostelium discoideum (Social amoeba).